The primary structure comprises 159 residues: 2-C-methyl-D-erythritol 2,4-cyclodiphosphate synthase (159 aa).

Residues aspartate 10 and histidine 12 each contribute to the a divalent metal cation site. Residues aspartate 10–histidine 12 and histidine 37–serine 38 contribute to the 4-CDP-2-C-methyl-D-erythritol 2-phosphate site. Residue histidine 45 coordinates a divalent metal cation. Residues aspartate 59–glycine 61, phenylalanine 64–aspartate 68, alanine 103–leucine 109, threonine 135–glutamate 138, phenylalanine 142, and arginine 145 contribute to the 4-CDP-2-C-methyl-D-erythritol 2-phosphate site.

The protein belongs to the IspF family. As to quaternary structure, homotrimer. It depends on a divalent metal cation as a cofactor.

The catalysed reaction is 4-CDP-2-C-methyl-D-erythritol 2-phosphate = 2-C-methyl-D-erythritol 2,4-cyclic diphosphate + CMP. It participates in isoprenoid biosynthesis; isopentenyl diphosphate biosynthesis via DXP pathway; isopentenyl diphosphate from 1-deoxy-D-xylulose 5-phosphate: step 4/6. Its function is as follows. Involved in the biosynthesis of isopentenyl diphosphate (IPP) and dimethylallyl diphosphate (DMAPP), two major building blocks of isoprenoid compounds. Catalyzes the conversion of 4-diphosphocytidyl-2-C-methyl-D-erythritol 2-phosphate (CDP-ME2P) to 2-C-methyl-D-erythritol 2,4-cyclodiphosphate (ME-CPP) with a corresponding release of cytidine 5-monophosphate (CMP). This chain is 2-C-methyl-D-erythritol 2,4-cyclodiphosphate synthase, found in Francisella tularensis subsp. tularensis (strain FSC 198).